A 210-amino-acid polypeptide reads, in one-letter code: Fimbriae Z protein (210 aa).

The 117-residue stretch at 5-121 (SVIIMDEHPI…DIYNAVKMIL (117 aa)) folds into the Response regulatory domain. A 4-aspartylphosphate modification is found at Asp56. An HTH luxR-type domain is found at 143-208 (GGHHDMPLSN…ELIDYAKSHE (66 aa)). The H-T-H motif DNA-binding region spans 167–186 (NKEIAEQLLLSNKTISAHKA).

Its subcellular location is the cytoplasm. This chain is Fimbriae Z protein (fimZ), found in Salmonella typhimurium (strain LT2 / SGSC1412 / ATCC 700720).